A 37-amino-acid chain; its full sequence is Large ribosomal subunit protein bL36 (37 aa).

It belongs to the bacterial ribosomal protein bL36 family.

The sequence is that of Large ribosomal subunit protein bL36 from Pelotomaculum thermopropionicum (strain DSM 13744 / JCM 10971 / SI).